The following is a 651-amino-acid chain: tRNA uridine 5-carboxymethylaminomethyl modification enzyme MnmG (651 aa).

11 to 16 (GAGHAG) is a binding site for FAD. 296-310 (GPRYCPSIEDKIVRF) serves as a coordination point for NAD(+).

This sequence belongs to the MnmG family. Homodimer. Heterotetramer of two MnmE and two MnmG subunits. The cofactor is FAD.

The protein resides in the cytoplasm. NAD-binding protein involved in the addition of a carboxymethylaminomethyl (cmnm) group at the wobble position (U34) of certain tRNAs, forming tRNA-cmnm(5)s(2)U34. This chain is tRNA uridine 5-carboxymethylaminomethyl modification enzyme MnmG, found in Chloroflexus aurantiacus (strain ATCC 29366 / DSM 635 / J-10-fl).